Here is a 244-residue protein sequence, read N- to C-terminus: 5-oxoprolinase subunit A (244 aa).

The protein belongs to the LamB/PxpA family. In terms of assembly, forms a complex composed of PxpA, PxpB and PxpC.

It carries out the reaction 5-oxo-L-proline + ATP + 2 H2O = L-glutamate + ADP + phosphate + H(+). In terms of biological role, catalyzes the cleavage of 5-oxoproline to form L-glutamate coupled to the hydrolysis of ATP to ADP and inorganic phosphate. This chain is 5-oxoprolinase subunit A, found in Salmonella paratyphi C (strain RKS4594).